Reading from the N-terminus, the 128-residue chain is Mini-ribonuclease 3 (128 aa).

Aspartate 17 is an active-site residue.

The protein belongs to the MrnC RNase family. Homodimer. Mg(2+) serves as cofactor.

It localises to the cytoplasm. In terms of biological role, involved in correct processing of both the 5' and 3' ends of 23S rRNA precursor. Processes 30S rRNA precursor transcript even in absence of ribonuclease 3 (Rnc); Rnc processes 30S rRNA into smaller rRNA precursors. This Streptococcus pneumoniae (strain ATCC BAA-255 / R6) protein is Mini-ribonuclease 3.